We begin with the raw amino-acid sequence, 267 residues long: Tryptophan synthase alpha chain (267 aa).

Catalysis depends on proton acceptor residues Glu-39 and Asp-50.

This sequence belongs to the TrpA family. In terms of assembly, tetramer of two alpha and two beta chains.

It carries out the reaction (1S,2R)-1-C-(indol-3-yl)glycerol 3-phosphate + L-serine = D-glyceraldehyde 3-phosphate + L-tryptophan + H2O. It participates in amino-acid biosynthesis; L-tryptophan biosynthesis; L-tryptophan from chorismate: step 5/5. Its function is as follows. The alpha subunit is responsible for the aldol cleavage of indoleglycerol phosphate to indole and glyceraldehyde 3-phosphate. The chain is Tryptophan synthase alpha chain from Helicobacter hepaticus (strain ATCC 51449 / 3B1).